A 62-amino-acid chain; its full sequence is UPF0291 protein CLI_2672 (62 aa).

Belongs to the UPF0291 family.

It is found in the cytoplasm. The chain is UPF0291 protein CLI_2672 from Clostridium botulinum (strain Langeland / NCTC 10281 / Type F).